Consider the following 456-residue polypeptide: Bifunctional protein GlmU (456 aa).

The tract at residues 1 to 229 is pyrophosphorylase; that stretch reads MLNSAMSVVI…LSEVEGVNNR (229 aa). UDP-N-acetyl-alpha-D-glucosamine is bound by residues 11–14, lysine 25, glutamine 76, 81–82, 103–105, glycine 140, glutamate 154, asparagine 169, and asparagine 227; these read LAAG, GT, and YGD. Aspartate 105 contributes to the Mg(2+) binding site. Residue asparagine 227 coordinates Mg(2+). The interval 230 to 250 is linker; it reads LQLSRLERVYQSEQAEKLLLA. The tract at residues 251–456 is N-acetyltransferase; the sequence is GVMLRDPARF…QGWQRPAKKK (206 aa). Arginine 333 and lysine 351 together coordinate UDP-N-acetyl-alpha-D-glucosamine. The active-site Proton acceptor is histidine 363. Residues tyrosine 366 and asparagine 377 each coordinate UDP-N-acetyl-alpha-D-glucosamine. Acetyl-CoA-binding positions include alanine 380, 386–387, serine 405, alanine 423, and arginine 440; that span reads NY.

The protein in the N-terminal section; belongs to the N-acetylglucosamine-1-phosphate uridyltransferase family. It in the C-terminal section; belongs to the transferase hexapeptide repeat family. Homotrimer. It depends on Mg(2+) as a cofactor.

The protein localises to the cytoplasm. It carries out the reaction alpha-D-glucosamine 1-phosphate + acetyl-CoA = N-acetyl-alpha-D-glucosamine 1-phosphate + CoA + H(+). The enzyme catalyses N-acetyl-alpha-D-glucosamine 1-phosphate + UTP + H(+) = UDP-N-acetyl-alpha-D-glucosamine + diphosphate. It participates in nucleotide-sugar biosynthesis; UDP-N-acetyl-alpha-D-glucosamine biosynthesis; N-acetyl-alpha-D-glucosamine 1-phosphate from alpha-D-glucosamine 6-phosphate (route II): step 2/2. Its pathway is nucleotide-sugar biosynthesis; UDP-N-acetyl-alpha-D-glucosamine biosynthesis; UDP-N-acetyl-alpha-D-glucosamine from N-acetyl-alpha-D-glucosamine 1-phosphate: step 1/1. The protein operates within bacterial outer membrane biogenesis; LPS lipid A biosynthesis. Its function is as follows. Catalyzes the last two sequential reactions in the de novo biosynthetic pathway for UDP-N-acetylglucosamine (UDP-GlcNAc). The C-terminal domain catalyzes the transfer of acetyl group from acetyl coenzyme A to glucosamine-1-phosphate (GlcN-1-P) to produce N-acetylglucosamine-1-phosphate (GlcNAc-1-P), which is converted into UDP-GlcNAc by the transfer of uridine 5-monophosphate (from uridine 5-triphosphate), a reaction catalyzed by the N-terminal domain. This chain is Bifunctional protein GlmU, found in Citrobacter koseri (strain ATCC BAA-895 / CDC 4225-83 / SGSC4696).